Reading from the N-terminus, the 595-residue chain is Aspartate--tRNA(Asp/Asn) ligase (595 aa).

Glutamate 178 contributes to the L-aspartate binding site. The tract at residues 202–205 (QLFK) is aspartate. L-aspartate is bound at residue arginine 224. ATP contacts are provided by residues 224 to 226 (RDE) and glutamine 233. Histidine 458 is an L-aspartate binding site. Position 488 (glutamate 488) interacts with ATP. Arginine 495 is an L-aspartate binding site. Residue 540 to 543 (GLDR) participates in ATP binding.

Belongs to the class-II aminoacyl-tRNA synthetase family. Type 1 subfamily. Homodimer.

It localises to the cytoplasm. It carries out the reaction tRNA(Asx) + L-aspartate + ATP = L-aspartyl-tRNA(Asx) + AMP + diphosphate. Aspartyl-tRNA synthetase with relaxed tRNA specificity since it is able to aspartylate not only its cognate tRNA(Asp) but also tRNA(Asn). Reaction proceeds in two steps: L-aspartate is first activated by ATP to form Asp-AMP and then transferred to the acceptor end of tRNA(Asp/Asn). The protein is Aspartate--tRNA(Asp/Asn) ligase of Trichodesmium erythraeum (strain IMS101).